The sequence spans 3148 residues: Huntingtin (3148 aa).

HEAT repeat units follow at residues 149–186 (PYLV…ALGH) and 191–228 (GEIK…HSRR). 3 stretches are compositionally biased toward polar residues: residues 428-451 (QQPR…SSEQ), 475-486 (SRSSSCGANITP), and 516-526 (PSDSSQTTTEG). 2 disordered regions span residues 428 to 532 (QQPR…SAVT) and 557 to 622 (QDEE…NKMS). Residues 602–621 (SVDRFIPKDEPPEPEPDNKM) are compositionally biased toward basic and acidic residues. HEAT repeat units follow at residues 760-797 (LSLV…SLCG) and 861-898 (LQER…RLFF). Composition is skewed to low complexity over residues 1025–1042 (TLSV…TTSS) and 1105–1115 (SSSSTNTSGGT). Disordered stretches follow at residues 1025–1047 (TLSV…VDPE), 1098–1117 (WAGE…GTHK), and 1158–1215 (GPPV…GSTA). The segment covering 1201-1215 (EANTGRPTESTGSTA) has biased composition (polar residues). The HEAT 5 repeat unit spans residues 1419-1456 (LFEPLVIKALKQYTTSTSVALQRQVLDLLAQLVQLRVN). Residues 1712-1730 (PNLSPSDQPAGDGQQNQEP) are compositionally biased toward polar residues. 2 disordered regions span residues 1712–1735 (PNLS…GEAQ) and 2072–2091 (VSDT…DGDP). Low complexity predominate over residues 2072–2084 (VSDTSSPSTPVTS). A Nuclear export signal motif is present at residues 2398 to 2407 (IIISLSRLPL). Residues 2639-2649 (EWGEDEDDEAD) show a composition bias toward acidic residues. The tract at residues 2639-2664 (EWGEDEDDEADPPAPTSPPLSPINSR) is disordered. Over residues 2650–2659 (PPAPTSPPLS) the composition is skewed to pro residues.

Belongs to the huntingtin family.

Its subcellular location is the cytoplasm. It localises to the nucleus. Its function is as follows. May play a role in microtubule-mediated transport or vesicle function. This chain is Huntingtin (htt), found in Takifugu rubripes (Japanese pufferfish).